Reading from the N-terminus, the 285-residue chain is tRNA U34 carboxymethyltransferase (285 aa).

Carboxy-S-adenosyl-L-methionine-binding positions include Lys56, Trp70, Lys75, Gly94, 143–144, Tyr163, and Arg278; that span reads VE.

The protein belongs to the class I-like SAM-binding methyltransferase superfamily. CmoB family. As to quaternary structure, homotetramer.

It catalyses the reaction carboxy-S-adenosyl-L-methionine + 5-hydroxyuridine(34) in tRNA = 5-carboxymethoxyuridine(34) in tRNA + S-adenosyl-L-homocysteine + H(+). In terms of biological role, catalyzes carboxymethyl transfer from carboxy-S-adenosyl-L-methionine (Cx-SAM) to 5-hydroxyuridine (ho5U) to form 5-carboxymethoxyuridine (cmo5U) at position 34 in tRNAs. This chain is tRNA U34 carboxymethyltransferase, found in Campylobacter hominis (strain ATCC BAA-381 / DSM 21671 / CCUG 45161 / LMG 19568 / NCTC 13146 / CH001A).